We begin with the raw amino-acid sequence, 290 residues long: Manganese efflux system protein MneS (290 aa).

6 helical membrane-spanning segments follow: residues 15–35 (LVSI…GYLF), 39–61 (ALTA…LIGL), 82–102 (IASL…LFSA), 113–133 (TPDM…LIVY), 159–179 (AFVS…LAWI), and 181–201 (TVTA…IFKE).

Belongs to the cation diffusion facilitator (CDF) transporter (TC 2.A.4) family.

The protein resides in the cell membrane. Functionally, secondary manganese efflux system. May prevent manganese intoxication. In Bacillus subtilis (strain 168), this protein is Manganese efflux system protein MneS.